A 611-amino-acid polypeptide reads, in one-letter code: Dolabella-3,7-dien-18-ol synthase TPS06 (611 aa).

Residues Asp363, Asp367, Asp507, Thr511, and Glu515 each coordinate Mg(2+). Residues 363 to 367 carry the DDXXD motif; degenerate motif; sequence DNTFD.

This sequence belongs to the terpene synthase family. Tpsa subfamily. Mg(2+) serves as cofactor. The cofactor is Mn(2+). As to expression, predominantly expressed in flowers but also in stems, siliques, roots and leaves.

Its subcellular location is the cytoplasm. The catalysed reaction is (2E,6E,10E)-geranylgeranyl diphosphate + H2O = (3E,7E)-dolabella-3,7-dien-18-ol + diphosphate. It participates in secondary metabolite biosynthesis; terpenoid biosynthesis. Functionally, involved in terpene biosynthesis in roots. Possesses sesquiterpene (C15) synthase activity and diterpene (C20) synthase activity in vitro. Possesses dolabella-3,7-dien-18-ol synthase activity in vitro. Catalyzes the formation of dolabella-3,7-dien-18-ol from geranylgeranyl diphosphate. This Arabidopsis thaliana (Mouse-ear cress) protein is Dolabella-3,7-dien-18-ol synthase TPS06.